The sequence spans 308 residues: Thiohydrolase (308 aa).

This sequence belongs to the polyketide transferase af380 family.

It participates in mycotoxin biosynthesis. Functionally, thiohydrolase; part of the gene cluster that mediates the biosynthesis of brefeldin A (BFA), a protein transport inhibitor that shows antiviral, antifungal, and antitumor properties. The proposed biosynthesis of BFA involves formation of an acyclic polyketide chain that is differentially tailored throughout the backbone. The highly reducing polyketide synthase Bref-PKS is proposed to synthesize the precisely reduced octaketide precursor, which could then be directly offloaded by the thiohydrolase enzyme Bref-TH followed by a cytochrome P450 monooxygenase-mediated formation of the cyclopentane ring and macrocyclization to afford 7-deoxy BFA. Alternatively, the first ring annulation can also occur on the ACP-tethered intermediate before the thiohydrolase release and lactonization. The C7-hydroxylation by another cytochrome P450 monooxygenase is believed to be the final step in the process to obtain the final structure of BFA. In addition to the HRPKS Bref-PKS and the thiohydrolase Bref-TH, the brefeldin A biosynthesis cluster contains 4 cytochrome p450 monooxygenases (called orf3 to orf6), as well a the probable cluster-specific transcription regulator orf8. In Eupenicillium brefeldianum (Penicillium brefeldianum), this protein is Thiohydrolase.